The sequence spans 250 residues: Adenosylcobinamide-GDP ribazoletransferase (250 aa).

The next 6 helical transmembrane spans lie at isoleucine 33–isoleucine 53, isoleucine 63–glycine 83, leucine 109–threonine 129, leucine 137–isoleucine 157, phenylalanine 180–phenylalanine 200, and isoleucine 203–glycine 223.

This sequence belongs to the CobS family. Mg(2+) is required as a cofactor.

Its subcellular location is the cell membrane. It catalyses the reaction alpha-ribazole + adenosylcob(III)inamide-GDP = adenosylcob(III)alamin + GMP + H(+). It carries out the reaction alpha-ribazole 5'-phosphate + adenosylcob(III)inamide-GDP = adenosylcob(III)alamin 5'-phosphate + GMP + H(+). Its pathway is cofactor biosynthesis; adenosylcobalamin biosynthesis; adenosylcobalamin from cob(II)yrinate a,c-diamide: step 7/7. Functionally, joins adenosylcobinamide-GDP and alpha-ribazole to generate adenosylcobalamin (Ado-cobalamin). Also synthesizes adenosylcobalamin 5'-phosphate from adenosylcobinamide-GDP and alpha-ribazole 5'-phosphate. The polypeptide is Adenosylcobinamide-GDP ribazoletransferase (Thermoanaerobacter sp. (strain X514)).